The sequence spans 146 residues: Acidic phospholipase A2 C (146 aa).

The N-terminal stretch at 1–21 is a signal peptide; that stretch reads MNPAHLLILAAVCVSPLGASS. Positions 22 to 27 are excised as a propeptide; it reads NRPMPL. 7 disulfide bridges follow: Cys-38–Cys-98, Cys-53–Cys-145, Cys-55–Cys-71, Cys-70–Cys-126, Cys-77–Cys-119, Cys-87–Cys-112, and Cys-105–Cys-117. Positions 54, 56, and 58 each coordinate Ca(2+). His-74 is a catalytic residue. Position 75 (Asp-75) interacts with Ca(2+). Asp-120 is a catalytic residue.

It belongs to the phospholipase A2 family. Group I subfamily. D49 sub-subfamily. Ca(2+) is required as a cofactor. In terms of tissue distribution, expressed by the venom gland.

The protein resides in the secreted. The catalysed reaction is a 1,2-diacyl-sn-glycero-3-phosphocholine + H2O = a 1-acyl-sn-glycero-3-phosphocholine + a fatty acid + H(+). PLA2 catalyzes the calcium-dependent hydrolysis of the 2-acyl groups in 3-sn-phosphoglycerides. In Naja sputatrix (Malayan spitting cobra), this protein is Acidic phospholipase A2 C.